Here is a 249-residue protein sequence, read N- to C-terminus: DNA polymerase sliding clamp (249 aa).

It belongs to the PCNA family. In terms of assembly, homotrimer. The subunits circularize to form a toroid; DNA passes through its center. Replication factor C (RFC) is required to load the toroid on the DNA.

Sliding clamp subunit that acts as a moving platform for DNA processing. Responsible for tethering the catalytic subunit of DNA polymerase and other proteins to DNA during high-speed replication. This chain is DNA polymerase sliding clamp, found in Thermococcus sibiricus (strain DSM 12597 / MM 739).